The chain runs to 58 residues: UPF0391 membrane protein MADE_1011595 (58 aa).

A run of 2 helical transmembrane segments spans residues 4 to 24 (WAIT…GGIA) and 27 to 47 (ATGI…ISLI).

The protein belongs to the UPF0391 family.

It localises to the cell membrane. The protein is UPF0391 membrane protein MADE_1011595 of Alteromonas mediterranea (strain DSM 17117 / CIP 110805 / LMG 28347 / Deep ecotype).